A 470-amino-acid chain; its full sequence is FRIGIDA-like protein 1 (470 aa).

Residues 336–369 (KDQNLESEFTQEKVEERVEELEKNKALRKRNTTN) adopt a coiled-coil conformation. The tract at residues 355-400 (ELEKNKALRKRNTTNPPKQEPQQKGKKRTRDCKNGSQVPVPSQQLL) is disordered. Over residues 388 to 400 (NGSQVPVPSQQLL) the composition is skewed to polar residues.

Belongs to the Frigida family. In terms of assembly, component of the transcription activator complex FRI-C composed of FRI, FRL1, SUF4, FLX and FES1. Interacts with FRI and SUF4. As to expression, expressed during seed development and in dry seed. Preferentially expressed in the chalazal endosperm during early stages of seed development.

Required for FRI-mediated up-regulation of FLC transcripts, but not redundant with FRI and only partially redundant with FRL2. Required for the stabilization of the FRI-C complex. This chain is FRIGIDA-like protein 1 (FRL1), found in Arabidopsis thaliana (Mouse-ear cress).